A 237-amino-acid chain; its full sequence is Neurogenin-1 (237 aa).

Residues 35 to 83 (LQQAASASGPPAPARRGAPNISRASEVPGAQDDEQERRRRRGRTRVRSE) form a disordered region. The span at 38-53 (AASASGPPAPARRGAP) shows a compositional bias: low complexity. In terms of domain architecture, bHLH spans 92-144 (SRRVKANDRERNRMHNLNAALDALRSVLPSFPDDTKLTKIETLRFAYNYIWAL). The segment at 175-209 (GPPSPASDAESWGSGAAAASPLSDPSSPAASEDFT) is disordered. Positions 180 to 207 (ASDAESWGSGAAAASPLSDPSSPAASED) are enriched in low complexity.

In terms of assembly, efficient DNA binding requires dimerization with another bHLH protein. In terms of tissue distribution, expression restricted to the embryonic nervous system.

The protein resides in the nucleus. Functionally, acts as a transcriptional regulator. Involved in the initiation of neuronal differentiation. Activates transcription by binding to the E box (5'-CANNTG-3'). Associates with chromatin to enhancer regulatory elements in genes encoding key transcriptional regulators of neurogenesis. The polypeptide is Neurogenin-1 (NEUROG1) (Homo sapiens (Human)).